We begin with the raw amino-acid sequence, 320 residues long: Aspartate carbamoyltransferase catalytic subunit (320 aa).

Residues arginine 68 and threonine 69 each coordinate carbamoyl phosphate. An L-aspartate-binding site is contributed by lysine 96. Carbamoyl phosphate is bound by residues arginine 118, histidine 148, and glutamine 151. Residues arginine 181 and arginine 236 each contribute to the L-aspartate site. Carbamoyl phosphate-binding residues include glycine 277 and proline 278.

It belongs to the aspartate/ornithine carbamoyltransferase superfamily. ATCase family. Heterododecamer (2C3:3R2) of six catalytic PyrB chains organized as two trimers (C3), and six regulatory PyrI chains organized as three dimers (R2).

The enzyme catalyses carbamoyl phosphate + L-aspartate = N-carbamoyl-L-aspartate + phosphate + H(+). It functions in the pathway pyrimidine metabolism; UMP biosynthesis via de novo pathway; (S)-dihydroorotate from bicarbonate: step 2/3. Its function is as follows. Catalyzes the condensation of carbamoyl phosphate and aspartate to form carbamoyl aspartate and inorganic phosphate, the committed step in the de novo pyrimidine nucleotide biosynthesis pathway. This Polaromonas sp. (strain JS666 / ATCC BAA-500) protein is Aspartate carbamoyltransferase catalytic subunit.